The sequence spans 384 residues: Lipid-A-disaccharide synthase (384 aa).

Belongs to the LpxB family.

The catalysed reaction is a lipid X + a UDP-2-N,3-O-bis[(3R)-3-hydroxyacyl]-alpha-D-glucosamine = a lipid A disaccharide + UDP + H(+). It functions in the pathway bacterial outer membrane biogenesis; LPS lipid A biosynthesis. Functionally, condensation of UDP-2,3-diacylglucosamine and 2,3-diacylglucosamine-1-phosphate to form lipid A disaccharide, a precursor of lipid A, a phosphorylated glycolipid that anchors the lipopolysaccharide to the outer membrane of the cell. This Cellvibrio japonicus (strain Ueda107) (Pseudomonas fluorescens subsp. cellulosa) protein is Lipid-A-disaccharide synthase.